A 105-amino-acid chain; its full sequence is Death-associated protein 1 homolog (105 aa).

The tract at residues 75–105 (AAQVAHQKPVPSAQKLPAGQHLNQHIHQPRK) is disordered. Residues 95 to 105 (HLNQHIHQPRK) show a composition bias toward polar residues.

This sequence belongs to the DAP-DAPL1 family. As to quaternary structure, associates with ribosomes; inhibiting translation. Interacts with eiF5a (eif5a and eif5a2); inhibiting translation.

In terms of biological role, ribosome-binding protein involved in ribosome hibernation, a process during which ribosomes are stabilized in an inactive state and preserved from proteasomal degradation. Acts via its association with eiF5a (eif5a and eif5a2) at the polypeptide exit tunnel of the ribosome, preventing mRNA translation. Involved in ribosome hibernation in the mature egg by preventing mRNA translation, leading to ribosome inactivation. Ribosomes, which are produced in large quantities during oogenesis, are stored and translationally repressed in the egg and early embryo. Compared to dap1b, binds and inactivates ribosomes less efficiently. In Danio rerio (Zebrafish), this protein is Death-associated protein 1 homolog.